A 672-amino-acid polypeptide reads, in one-letter code: DNA ligase (672 aa).

Residues 32–36 (DEKYD), 82–83 (SL), and Glu113 contribute to the NAD(+) site. Lys115 (N6-AMP-lysine intermediate) is an active-site residue. Arg136, Glu173, Lys290, and Lys314 together coordinate NAD(+). Residues Cys408, Cys411, Cys427, and Cys433 each coordinate Zn(2+). One can recognise a BRCT domain in the interval 592-672 (DNNNTLFRKK…EFLNIINVYL (81 aa)).

Belongs to the NAD-dependent DNA ligase family. LigA subfamily. Mg(2+) is required as a cofactor. Requires Mn(2+) as cofactor.

It carries out the reaction NAD(+) + (deoxyribonucleotide)n-3'-hydroxyl + 5'-phospho-(deoxyribonucleotide)m = (deoxyribonucleotide)n+m + AMP + beta-nicotinamide D-nucleotide.. In terms of biological role, DNA ligase that catalyzes the formation of phosphodiester linkages between 5'-phosphoryl and 3'-hydroxyl groups in double-stranded DNA using NAD as a coenzyme and as the energy source for the reaction. It is essential for DNA replication and repair of damaged DNA. The sequence is that of DNA ligase from Buchnera aphidicola subsp. Baizongia pistaciae (strain Bp).